The primary structure comprises 392 residues: Protein-glutamate methylesterase/protein-glutamine glutaminase (392 aa).

The 118-residue stretch at 9–126 (TVLIVDDSPF…GADIQALARD (118 aa)) folds into the Response regulatory domain. Asp-60 is modified (4-aspartylphosphate). The interval 148-194 (VSRISSASGSRPPWTAGAASENTNRLSSPGSTSSTLGSAKGRSLDSG) is disordered. Low complexity predominate over residues 173–185 (LSSPGSTSSTLGS). One can recognise a CheB-type methylesterase domain in the interval 198–392 (PKYPVEIVAI…RHIVECVQRR (195 aa)). Catalysis depends on residues Ser-210, His-237, and Asp-334.

It belongs to the CheB family. Post-translationally, phosphorylated by CheA. Phosphorylation of the N-terminal regulatory domain activates the methylesterase activity.

The protein resides in the cytoplasm. The catalysed reaction is [protein]-L-glutamate 5-O-methyl ester + H2O = L-glutamyl-[protein] + methanol + H(+). It carries out the reaction L-glutaminyl-[protein] + H2O = L-glutamyl-[protein] + NH4(+). Involved in chemotaxis. Part of a chemotaxis signal transduction system that modulates chemotaxis in response to various stimuli. Catalyzes the demethylation of specific methylglutamate residues introduced into the chemoreceptors (methyl-accepting chemotaxis proteins or MCP) by CheR. Also mediates the irreversible deamidation of specific glutamine residues to glutamic acid. The sequence is that of Protein-glutamate methylesterase/protein-glutamine glutaminase from Desulfitobacterium hafniense (strain Y51).